We begin with the raw amino-acid sequence, 428 residues long: Lysophosphatidic acid phosphatase type 6 (428 aa).

A mitochondrion-targeting transit peptide spans 1 to 32; it reads MITGVFSMRLWTPVGVLTSLAYCLHQRRVALA. Residues 58–168 form a substrate binding region; the sequence is RHGARSPLKP…VFIRSTNIFR (111 aa). Residue H59 is the Nucleophile of the active site. D335 (proton donor) is an active-site residue.

This sequence belongs to the histidine acid phosphatase family. In terms of assembly, monomer. In terms of tissue distribution, highly expressed in kidney, heart, small intestine, muscle, liver, prostate, testis, ovary and weakly expressed in thymus and colon.

The protein localises to the mitochondrion. It carries out the reaction a phosphate monoester + H2O = an alcohol + phosphate. The catalysed reaction is 1-(9Z-octadecenoyl)-sn-glycero-3-phosphate + H2O = 1-(9Z-octadecenoyl)-sn-glycerol + phosphate. Its function is as follows. Hydrolyzes lysophosphatidic acid (LPA) containing a medium length fatty acid chain to the corresponding monoacylglycerol. Has highest activity with lysophosphatidic acid containing myristate (C14:0), monounsaturated oleate (C18:1) or palmitate (C16:0), and lower activity with C18:0 and C6:0 lysophosphatidic acid. This chain is Lysophosphatidic acid phosphatase type 6 (ACP6), found in Homo sapiens (Human).